A 341-amino-acid chain; its full sequence is Spindle assembly checkpoint protein BUB3 (341 aa).

7 WD repeats span residues 9–48 (APKD…KNVD), 54–96 (RYKH…QALT), 97–137 (NNEA…DGVI), 144–185 (SNNT…DDNG), 191–233 (GLKY…YNSS), 249–288 (NLAY…KIKN), and 292–329 (FNED…IELN).

This sequence belongs to the WD repeat BUB3 family. As to quaternary structure, component of the mitotic checkpoint complex (MCC) which consists of MAD2, MAD3, BUB3 and CDC20. Part of complex consisting of MAD1, BUB1 and BUB3 after activation of spindle checkpoint. Part of the BUB1-BUB3 complex, composed of BUB1 and BUB3. Interacts with SPC105 (via phosphorylated MELT motifs); the interaction is direct and occurs when part of the BUB1-BUB3 complex. Interacts with MAD3; the interaction is direct. In terms of processing, phosphorylated by BUB1.

It localises to the nucleus. Its subcellular location is the chromosome. It is found in the centromere. The protein resides in the kinetochore. Functionally, involved in mitotic spindle assembly checkpoint signaling, a process that delays anaphase until chromosomes are bioriented on the spindle, and in the repair of incorrect mitotic kinetochore-spindle microtubule attachments. Component of the mitotic checkpoint complex (MCC) which inhibits the ubiquitin ligase activity of the anaphase promoting complex/cyclosome (APC/C) by preventing its activation by CDC20. The sequence is that of Spindle assembly checkpoint protein BUB3 (BUB3) from Saccharomyces cerevisiae (strain ATCC 204508 / S288c) (Baker's yeast).